We begin with the raw amino-acid sequence, 344 residues long: Phenylalanine--tRNA ligase alpha subunit (344 aa).

Position 259 (glutamate 259) interacts with Mg(2+).

The protein belongs to the class-II aminoacyl-tRNA synthetase family. Phe-tRNA synthetase alpha subunit type 1 subfamily. Tetramer of two alpha and two beta subunits. Mg(2+) is required as a cofactor.

The protein localises to the cytoplasm. The catalysed reaction is tRNA(Phe) + L-phenylalanine + ATP = L-phenylalanyl-tRNA(Phe) + AMP + diphosphate + H(+). This chain is Phenylalanine--tRNA ligase alpha subunit, found in Nitrosospira multiformis (strain ATCC 25196 / NCIMB 11849 / C 71).